A 188-amino-acid chain; its full sequence is Elongation factor P (188 aa).

The protein belongs to the elongation factor P family.

It localises to the cytoplasm. It participates in protein biosynthesis; polypeptide chain elongation. Involved in peptide bond synthesis. Stimulates efficient translation and peptide-bond synthesis on native or reconstituted 70S ribosomes in vitro. Probably functions indirectly by altering the affinity of the ribosome for aminoacyl-tRNA, thus increasing their reactivity as acceptors for peptidyl transferase. This chain is Elongation factor P, found in Leptospira borgpetersenii serovar Hardjo-bovis (strain JB197).